The following is a 585-amino-acid chain: Arginine--tRNA ligase (585 aa).

Positions 131–141 (ANPTGPMHVGH) match the 'HIGH' region motif.

It belongs to the class-I aminoacyl-tRNA synthetase family. Monomer.

The protein resides in the cytoplasm. The catalysed reaction is tRNA(Arg) + L-arginine + ATP = L-arginyl-tRNA(Arg) + AMP + diphosphate. This chain is Arginine--tRNA ligase, found in Sinorhizobium medicae (strain WSM419) (Ensifer medicae).